The sequence spans 271 residues: Insulin-like growth factor-binding protein 5 (271 aa).

A signal peptide spans 1–19; sequence MVLTAVLLLLAACAGPAQG. One can recognise an IGFBP N-terminal domain in the interval 22–102; that stretch reads SFVHCEPCDE…LHGRGVCLNE (81 aa). Intrachain disulfides connect C26-C52, C29-C54, C37-C55, C44-C58, C66-C79, and C73-C99. The span at 109-121 shows a compositional bias: basic and acidic residues; the sequence is AKIERDSREHEEP. The interval 109-129 is disordered; it reads AKIERDSREHEEPTTSEMAEE. S115 carries the phosphoserine modification. The Thyroglobulin type-1 domain occupies 188-262; the sequence is QGPCRRHMEA…MEYVDGDFQC (75 aa). Cystine bridges form between C191/C218, C229/C240, and C242/C262.

As to quaternary structure, interacts with IGF1; this interaction enhances the growth stimulatory effects of IGF1 on fibroblasts. Interacts with CAV1; this interaction allows trafficking of IGFBP5 from the plasma membrane to the nucleus. Interacts with NCL; this interaction is necessary for IGFBP5 localization to the nucleus.

It is found in the secreted. The protein localises to the cytoplasm. The protein resides in the nucleus. In terms of biological role, multifunctional protein that plays a critical role in regulating the availability of IGFs to their receptors and thereby regulates IGF-mediated cellular processes including proliferation, differentiation, and apoptosis in a cell-type specific manner. Increases the cell proliferation of osteoblasts, intestinal smooth muscle cells and neuroblastoma cells. Enhances adhesion and survival of epithelial cells but decreases adhesion of mesenchymal cells. Once secreted, acts as a major mediator of mTORC1-dependent feedback inhibition of IGF1 signaling. Also plays a role in the induction of extracellular matrix (ECM) production and deposition independently of its nuclear translocation and binding to IGFs. Acts itself as a growth factor that can act independently of IGFs to regulate bone formation. Acts as a ligand for the ROR1 receptor which triggers formation of ROR1/HER2 heterodimer to enhance CREB oncogenic signaling. This is Insulin-like growth factor-binding protein 5 (IGFBP5) from Sus scrofa (Pig).